Reading from the N-terminus, the 250-residue chain is MYKLVLMRHGESQWNLENRFTGWTDVDLTETGREQARKAGELLKKEGYQFDLAYTSVLKRAIRTLWIALDAMDAMYTPVGISWRLNERHYGNLQGLNKAETAAKYGDEQVLIWRRAYAIAPEPLPLDDERHPRFDSRYAKIPADQLPATECLQDTVARVLPYWNDSIAPAIRAGRRVLVAAHGNSLRALIKHLDNISDDDIVGLNIPTGQPLVYELDEALRPIRHYYLGDAAEIEAAMAAVAAQGKAKKD.

Substrate-binding positions include 8–15, 21–22, Arg60, 87–90, Lys98, 114–115, and 183–184; these read RHGESQWN, TG, ERHY, RR, and GN. His9 acts as the Tele-phosphohistidine intermediate in catalysis. Glu87 serves as the catalytic Proton donor/acceptor.

Belongs to the phosphoglycerate mutase family. BPG-dependent PGAM subfamily. As to quaternary structure, homodimer.

It carries out the reaction (2R)-2-phosphoglycerate = (2R)-3-phosphoglycerate. It participates in carbohydrate degradation; glycolysis; pyruvate from D-glyceraldehyde 3-phosphate: step 3/5. In terms of biological role, catalyzes the interconversion of 2-phosphoglycerate and 3-phosphoglycerate. In Bordetella petrii (strain ATCC BAA-461 / DSM 12804 / CCUG 43448), this protein is 2,3-bisphosphoglycerate-dependent phosphoglycerate mutase.